The primary structure comprises 996 residues: Low-density lipoprotein receptor-related protein 8 (996 aa).

The signal sequence occupies residues 1–28 (MGRPELGALRPLALLLLLLLQLQHLSAA). The Extracellular portion of the chain corresponds to 29-858 (DPLPGGQGPV…GSQMGSTVTA (830 aa)). LDL-receptor class A domains are found at residues 40–76 (ECEEDQFRCRNERCIPLVWRCDEDNDCSDNSDEDDCP), 79–117 (TCADSDFTCDNGHCIPERWKCDGEEECPDGSDESKATCS), 120–158 (ECPAEKLSCGPTSHKCVPASWRCDGEKDCEGGADEAGCP), 160–196 (LCAPHEFQCSNRSCLASVFVCDGDDDCGDGSDERGCS), 199–238 (ACPPREFRCGGGGTCIPERWVCDRQFDCEDRSDEAAELCG), 250–287 (ACAPTAQFTCRSGECIHLGWRCDGDRDCKDKSDEADCS), 290–326 (PCRENEFQCGDGTCVLAIKRCNQERDCPDGSDEAGCL), and 330–369 (TCEGPRRFQCKSGECVDGGKVCDDQRDCRDWSDEPQKVCG). 30 cysteine pairs are disulfide-bonded: C41–C53, C48–C66, C60–C75, C80–C92, C87–C105, C99–C116, C121–C135, C128–C148, C142–C157, C161–C173, C168–C186, C180–C195, C200–C213, C207–C226, C220–C237, C251–C264, C259–C277, C271–C286, C291–C303, C298–C316, C310–C325, C331–C344, C339–C357, C351–C368, C373–C384, C380–C393, C395–C407, C413–C423, C419–C432, and C434–C447. Positions 58, 61, 63, 65, 71, and 72 each coordinate Ca(2+). An N-linked (GlcNAc...) asparagine glycan is attached at N170. The region spanning 364–408 (PQKVCGLNECLHNNGGCSHICTDLKIGFECTCPAGFQLLDQKTCG) is the EGF-like 1 domain. The EGF-like 2; calcium-binding domain maps to 409 to 448 (DIDECQDPDACSQICVNYKGYFKCECHPGYEMDTLTKNCK). LDL-receptor class B repeat units lie at residues 495–541 (NRIY…DWVH), 542–584 (KHIY…DPLR), 585–628 (GFMY…DLLS), 629–671 (QRLY…AVFE), and 672–714 (DKVF…FHEL). N551 carries an N-linked (GlcNAc...) asparagine glycan. A clustered O-linked oligosaccharides region spans residues 773–831 (STSTTTLASAMTRTVPATTRAPGTTIHDPTYQNHSTETPSQTAAAPHSVNVPRAPSTSP). The disordered stretch occupies residues 778–851 (TLASAMTRTV…SQHYGNEGSQ (74 aa)). The span at 802 to 815 (TYQNHSTETPSQTA) shows a compositional bias: polar residues. An N-linked (GlcNAc...) asparagine glycan is attached at N805. The span at 824-839 (PRAPSTSPSTPSPATS) shows a compositional bias: low complexity. N840 carries an N-linked (GlcNAc...) asparagine glycan. Positions 840–851 (NHSQHYGNEGSQ) are enriched in polar residues. The helical transmembrane segment at 859–881 (AVIGVIVPIVVIALLCMSGYLIW) threads the bilayer. The Cytoplasmic segment spans residues 882–996 (RNWKRKNTKS…ALSLEDDGLP (115 aa)).

It belongs to the LDLR family. In terms of assembly, homooligomer. Interacts with VLDLR. Reelin associates with two or more receptor molecules. Interacts with DAB1 and JNK-interacting proteins. Interacts with SNX17. Interacts with PCSK9. Interacts with MDK; this interaction is calcium dependent. Interacts with CLU. O-glycosylated. Some alternatively spliced isoforms lack the O-linked sugar domain. Post-translationally, undergoes sequential, furin and gamma-secretase dependent, proteolytic processing, resulting in the extracellular release of the entire ligand-binding domain as a soluble polypeptide and in the intracellular domain (ICD) release into the cytoplasm. The gamma-secretase-dependent proteolytical processing occurs after the bulk of the extracellular domain has been shed, in a furin-dependent manner, in alternatively spliced isoforms carrying the furin cleavage site. Hypoglycosylation (mainly hypo-O-glycosylation) leads to increased extracellular cleavage, which in turn results in accelerating release of the intracellular domain (ICD) by the gamma-secretase. The resulting receptor fragment is able to inhibit Reelin signaling and in particular the Reelin-induced DAB1 phosphorylation. In terms of processing, tyrosine phosphorylated upon apoE binding. Ubiquitinated by MYLIP leading to degradation. In terms of tissue distribution, expressed in neurons throughout the brain, with strong expression in pyramidal neurons of the hippocampus, granule cells of the dentate gyrus, cortical neurons and Purkinje cells of the cerebellum. Also expressed in the epithelium of the choroid plexus and of the blood vessels (apical expression), as well as in the epididymis.

The protein localises to the cell membrane. Its subcellular location is the secreted. Functionally, cell surface receptor for Reelin (RELN) and apolipoprotein E (apoE)-containing ligands. LRP8 participates in transmitting the extracellular Reelin signal to intracellular signaling processes, by binding to DAB1 on its cytoplasmic tail. Reelin acts via both the VLDL receptor (VLDLR) and LRP8 to regulate DAB1 tyrosine phosphorylation and microtubule function in neurons. LRP8 has higher affinity for Reelin than VLDLR. LRP8 is thus a key component of the Reelin pathway which governs neuronal layering of the forebrain during embryonic brain development. Binds the endoplasmic reticulum resident receptor-associated protein (RAP). Binds dimers of beta 2-glycoprotein I and may be involved in the suppression of platelet aggregation in the vasculature. Highly expressed in the initial segment of the epididymis, where it affects the functional expression of clusterin and phospholipid hydroperoxide glutathione peroxidase (PHGPx), two proteins required for sperm maturation. May also function as an endocytic receptor. Not required for endocytic uptake of SEPP1 in the kidney which is mediated by LRP2. Together with its ligand, apolipoprotein E (apoE), may indirectly play a role in the suppression of the innate immune response by controlling the survival of myeloid-derived suppressor cells. The chain is Low-density lipoprotein receptor-related protein 8 (Lrp8) from Mus musculus (Mouse).